The sequence spans 256 residues: Leucyl/phenylalanyl-tRNA--protein transferase (256 aa).

The segment at 232–256 is disordered; sequence DGCTGASRHGPGADMRRGDMSREST. A compositionally biased stretch (basic and acidic residues) spans 245–256; sequence DMRRGDMSREST.

The protein belongs to the L/F-transferase family.

Its subcellular location is the cytoplasm. The enzyme catalyses N-terminal L-lysyl-[protein] + L-leucyl-tRNA(Leu) = N-terminal L-leucyl-L-lysyl-[protein] + tRNA(Leu) + H(+). The catalysed reaction is N-terminal L-arginyl-[protein] + L-leucyl-tRNA(Leu) = N-terminal L-leucyl-L-arginyl-[protein] + tRNA(Leu) + H(+). It carries out the reaction L-phenylalanyl-tRNA(Phe) + an N-terminal L-alpha-aminoacyl-[protein] = an N-terminal L-phenylalanyl-L-alpha-aminoacyl-[protein] + tRNA(Phe). Functionally, functions in the N-end rule pathway of protein degradation where it conjugates Leu, Phe and, less efficiently, Met from aminoacyl-tRNAs to the N-termini of proteins containing an N-terminal arginine or lysine. The polypeptide is Leucyl/phenylalanyl-tRNA--protein transferase (Chromohalobacter salexigens (strain ATCC BAA-138 / DSM 3043 / CIP 106854 / NCIMB 13768 / 1H11)).